Consider the following 103-residue polypeptide: Histone H4 (103 aa).

A disordered region spans residues 1–32; the sequence is MNTQSIGAKGKSKAAKGIAKRHRKQSSLSDSI. Residues 10 to 25 are compositionally biased toward basic residues; that stretch reads GKSKAAKGIAKRHRKQ. Lys-16 bears the N6-acetyl-N6-methyllysine; alternate mark. Lys-16 bears the N6-methyllysine; alternate mark. The DNA-binding element occupies 20–24; the sequence is KRHRK. Lys-94 bears the N6-glutaryllysine mark.

Belongs to the histone H4 family. In terms of assembly, the nucleosome is a histone octamer containing two molecules each of H2A, H2B, H3 and H4 assembled in one H3-H4 heterotetramer and two H2A-H2B heterodimers. The octamer wraps approximately 147 bp of DNA. Glutarylation at Lys-94 (H4K91glu) destabilizes nucleosomes by promoting dissociation of the H2A-H2B dimers from nucleosomes.

The protein localises to the nucleus. The protein resides in the chromosome. In terms of biological role, core component of nucleosome. Nucleosomes wrap and compact DNA into chromatin, limiting DNA accessibility to the cellular machineries which require DNA as a template. Histones thereby play a central role in transcription regulation, DNA repair, DNA replication and chromosomal stability. DNA accessibility is regulated via a complex set of post-translational modifications of histones, also called histone code, and nucleosome remodeling. The polypeptide is Histone H4 (HHF1) (Encephalitozoon cuniculi (strain GB-M1) (Microsporidian parasite)).